A 134-amino-acid polypeptide reads, in one-letter code: Shikimate kinase (134 aa).

It belongs to the shikimate kinase family.

It is found in the cytoplasm. It carries out the reaction shikimate + ATP = 3-phosphoshikimate + ADP + H(+). It functions in the pathway metabolic intermediate biosynthesis; chorismate biosynthesis; chorismate from D-erythrose 4-phosphate and phosphoenolpyruvate: step 5/7. In Neisseria gonorrhoeae, this protein is Shikimate kinase (aroK).